Reading from the N-terminus, the 154-residue chain is Nucleoside diphosphate kinase A2 (154 aa).

ATP is bound by residues Lys-13, Phe-61, Arg-89, Thr-95, Arg-106, and Asn-116. His-119 (pros-phosphohistidine intermediate) is an active-site residue.

Belongs to the NDK family. The cofactor is Mg(2+).

It localises to the cytoplasm. The enzyme catalyses a 2'-deoxyribonucleoside 5'-diphosphate + ATP = a 2'-deoxyribonucleoside 5'-triphosphate + ADP. The catalysed reaction is a ribonucleoside 5'-diphosphate + ATP = a ribonucleoside 5'-triphosphate + ADP. In terms of biological role, major role in the synthesis of nucleoside triphosphates other than ATP. The ATP gamma phosphate is transferred to the NDP beta phosphate via a ping-pong mechanism, using a phosphorylated active-site intermediate. This chain is Nucleoside diphosphate kinase A2, found in Xenopus laevis (African clawed frog).